A 525-amino-acid chain; its full sequence is Keratin, type II cytoskeletal 4 (525 aa).

The segment at 1–145 is head; it reads MIARQSSVRG…DPEIQKIRTA (145 aa). Arg13 is subject to Omega-N-methylarginine. The interval 146–181 is coil 1A; sequence EREQIKTLNNKFASFIDKVRFLEQQNKVLETKWNLL. The region spanning 146–459 is the IF rod domain; that stretch reads EREQIKTLNN…KLLEGEECRM (314 aa). The segment at 182–200 is linker 1; the sequence is QQQTTTTSPKSLDPFFETY. The tract at residues 201 to 292 is coil 1B; sequence INALRKNLDT…VLYEAELAQM (92 aa). The linker 12 stretch occupies residues 293-316; it reads QTHVSDTSVVLSMDNNRNLDLDGI. Residues 317 to 455 form a coil 2 region; the sequence is IAEVRAQYED…ATYRKLLEGE (139 aa). Positions 456-524 are tail; that stretch reads ECRMSGECKS…SSATITKRSP (69 aa).

The protein belongs to the intermediate filament family. Heterotetramer of two type I and two type II keratins. Keratin-4 is generally associated with keratin-13. Expressed in the dorsal and ventral epithelium of the tongue. Highest expression levels are detected in the suprabasal layer with low levels detected in the basal cell layer. Within the suprabasal layer expression is highest in the spinous cells, decreases in the granular cells and is not detected in the stratum corneum.

This chain is Keratin, type II cytoskeletal 4 (Krt4), found in Mus musculus (Mouse).